A 219-amino-acid polypeptide reads, in one-letter code: tRNA (guanine-N(7)-)-methyltransferase (219 aa).

4 residues coordinate S-adenosyl-L-methionine: E46, E71, N100, and D122. The active site involves D122. Residues K126, D158, and 199 to 202 (TEYE) each bind substrate.

The protein belongs to the class I-like SAM-binding methyltransferase superfamily. TrmB family.

It carries out the reaction guanosine(46) in tRNA + S-adenosyl-L-methionine = N(7)-methylguanosine(46) in tRNA + S-adenosyl-L-homocysteine. It participates in tRNA modification; N(7)-methylguanine-tRNA biosynthesis. In terms of biological role, catalyzes the formation of N(7)-methylguanine at position 46 (m7G46) in tRNA. The sequence is that of tRNA (guanine-N(7)-)-methyltransferase from Leuconostoc citreum (strain KM20).